We begin with the raw amino-acid sequence, 378 residues long: Erythronate-4-phosphate dehydrogenase (378 aa).

The substrate site is built by serine 45 and threonine 66. NAD(+) contacts are provided by aspartate 146 and threonine 175. Arginine 208 is an active-site residue. Aspartate 232 is an NAD(+) binding site. Glutamate 237 is a catalytic residue. Histidine 254 acts as the Proton donor in catalysis. NAD(+) is bound at residue glycine 257. Residue tyrosine 258 participates in substrate binding.

Belongs to the D-isomer specific 2-hydroxyacid dehydrogenase family. PdxB subfamily. As to quaternary structure, homodimer.

The protein localises to the cytoplasm. The enzyme catalyses 4-phospho-D-erythronate + NAD(+) = (R)-3-hydroxy-2-oxo-4-phosphooxybutanoate + NADH + H(+). Its pathway is cofactor biosynthesis; pyridoxine 5'-phosphate biosynthesis; pyridoxine 5'-phosphate from D-erythrose 4-phosphate: step 2/5. Its function is as follows. Catalyzes the oxidation of erythronate-4-phosphate to 3-hydroxy-2-oxo-4-phosphonooxybutanoate. The sequence is that of Erythronate-4-phosphate dehydrogenase from Escherichia coli (strain K12 / MC4100 / BW2952).